We begin with the raw amino-acid sequence, 251 residues long: Probable aquaporin TIP4-1 (251 aa).

The next 2 membrane-spanning stretches (helical) occupy residues 26 to 46 (LVLTFVFVFTGVAATMAAGVP) and 57 to 77 (ALAGVAIATALAAGVLVTAGF). The NPA 1 motif lies at 85 to 87 (NPA). 3 helical membrane passes run 104 to 124 (ALYVAAQLLASSLACILLRYL), 144 to 164 (GLVMEIILTFSLLFVVYATIL), and 170 to 190 (VPGFGPLLTGLIVGANTIAGG). An NPA 2 motif is present at residues 198 to 200 (NPA). Residues 219–239 (WLGPLIGGPLAGLVYESLFLV) form a helical membrane-spanning segment.

The protein belongs to the MIP/aquaporin (TC 1.A.8) family. TIP (TC 1.A.8.10) subfamily. As to expression, expressed in roots, leaves and anthers.

The protein localises to the vacuole membrane. Its function is as follows. Aquaporins facilitate the transport of water and small neutral solutes across cell membranes. May be involved in transport from the vacuolar compartment to the cytoplasm. The chain is Probable aquaporin TIP4-1 (TIP4-1) from Oryza sativa subsp. japonica (Rice).